A 211-amino-acid chain; its full sequence is MVRRGVGTIETVNALVNDNYALIRNVAKYMLNDKGLTNAEFLRASYRRFIRLRPFVSNRSMVKDTYTDYIRYKYRYEDYPKRMAMIGVQCDNQLNRSQVKNSLSFVAKACSFIDESKGTKFEVARDNTMCRQILKNLLTIHYEKTSHTNEKRTPLRHIFQYSFEHMKDINKSTNSQSYSKPASPKSSLILDLYGEFDRDILLLNNLLNMRL.

This sequence belongs to the IRC19 family.

In terms of biological role, involved in sporulation and maintenance of the mitochondrial DNA. Is probably involved in a pathway contributing to genomic integrity. This chain is Increased recombination centers protein 19 (IRC19), found in Candida glabrata (strain ATCC 2001 / BCRC 20586 / JCM 3761 / NBRC 0622 / NRRL Y-65 / CBS 138) (Yeast).